We begin with the raw amino-acid sequence, 290 residues long: Zinc finger AN1 and C2H2 domain-containing stress-associated protein 16 (290 aa).

AN1-type zinc fingers lie at residues 7–55 (PNLG…QKDV) and 95–145 (VTKK…KPES). Residues Cys-13, Cys-18, Cys-28, Cys-31, Cys-36, His-39, His-45, Cys-47, Cys-101, Cys-106, Cys-118, Cys-121, Cys-126, His-129, His-135, and Cys-137 each contribute to the Zn(2+) site. 2 consecutive C2H2-type zinc fingers follow at residues 224–247 (EQCV…EKSH) and 261–284 (DVCP…ERDH).

In terms of biological role, may be involved in environmental stress response. The chain is Zinc finger AN1 and C2H2 domain-containing stress-associated protein 16 (SAP16) from Oryza sativa subsp. japonica (Rice).